A 480-amino-acid chain; its full sequence is MSAEVIHQVEEALDTDEKEMLLFSCRDVAIDVVPPNVRDLLDILRERGKLSVGDLAELLYRVRRFDLLKRILKMDRKAVETHLLRNPHLVSDYRVLMAEIGEDLDKSDVSSLIFLMKDYMGRGKISKEKSFLDLVVELEKLNLVAPDQLDLLEKCLKNIHRIDLKTKIQKYKQSVQGAGTSYRNVLQAAIQKSFKDPSNNFRLHNGRSKEQRLKEQLGTQQEPVKKSIQESEAFLPQSVPEERYKMKSKPLGICLIIDCIGNETELLRDTFTSLGYEVQKFLHLSMHGISQILGQFACMPEHRDYDSFVCVLVSRGGSQSVYGVDQTHSGLPLHHIRRMFMGDSCPYLAGKPKIFFIQNYVVSEGQLEDSSLLEVDGPAMKNVEFKAQKRGLCTVHREADFFWSLCTADVSLLEWSHSSPSLYLQCLSQKLRQERKRPLLDLHIELNGYMYDWNSRVSAKEKYYVWLQHTLRKKLIPSYT.

2 DED domains span residues 1 to 73 (MSAE…RILK) and 92 to 170 (DYRV…KIQK). The interaction with CASP8 stretch occupies residues 1–195 (MSAEVIHQVE…LQAAIQKSFK (195 aa)). Positions 1–227 (MSAEVIHQVE…GTQQEPVKKS (227 aa)) are interaction with FADD. Residues 1 to 305 (MSAEVIHQVE…FACMPEHRDY (305 aa)) are interaction with CASP8 propeptide. The tract at residues 1–435 (MSAEVIHQVE…CLSQKLRQER (435 aa)) is not proteolytically processed and involved in apoptosis inhibition. An interaction with CASP3 region spans residues 192 to 435 (KSFKDPSNNF…CLSQKLRQER (244 aa)). Residues 192-480 (KSFKDPSNNF…LRKKLIPSYT (289 aa)) are interaction with TRAF1 and TRAF2. An interaction with CASP8 subunits p18 and p10 region spans residues 217-480 (LGTQQEPVKK…LRKKLIPSYT (264 aa)). Residues 263–358 (ETELLRDTFT…AGKPKIFFIQ (96 aa)) are caspase. An interaction with CASP8 region spans residues 370-480 (SSLLEVDGPA…LRKKLIPSYT (111 aa)).

This sequence belongs to the peptidase C14A family. In terms of assembly, TNFRSF6 stimulation triggers recruitment to the death-inducing signaling complex (DISC) formed by TNFRSF6, FADD and CASP8. A proteolytic fragment (p43) stays associated with the DISC. Interacts with RIPK1. In terms of processing, proteolytically processed by CASP8 generating subunit p43 and p12.

In terms of biological role, apoptosis regulator protein which may function as a crucial link between cell survival and cell death pathways in mammalian cells. Acts as an inhibitor of TNFRSF6 mediated apoptosis. A proteolytic fragment (p43) is likely retained in the death-inducing signaling complex (DISC) thereby blocking further recruitment and processing of caspase-8 at the complex. Full length and shorter isoforms have been shown either to induce apoptosis or to reduce TNFRSF-triggered apoptosis. Lacks enzymatic (caspase) activity. The sequence is that of CASP8 and FADD-like apoptosis regulator (CFLAR) from Pongo abelii (Sumatran orangutan).